Consider the following 124-residue polypeptide: UPF0344 protein OB1184 (124 aa).

The next 4 helical transmembrane spans lie at 3-23 (HMHI…LVMY), 33-53 (IIHM…GILT), 62-82 (MPIL…VAMM), and 104-124 (IALV…FLFI).

This sequence belongs to the UPF0344 family.

It localises to the cell membrane. This is UPF0344 protein OB1184 from Oceanobacillus iheyensis (strain DSM 14371 / CIP 107618 / JCM 11309 / KCTC 3954 / HTE831).